Consider the following 345-residue polypeptide: G-protein coupled receptor family C group 5 member D (345 aa).

At 1–27 the chain is on the extracellular side; that stretch reads MYKDCIESTGDYFLLCDAEGPWGIILE. A helical transmembrane segment spans residues 28 to 48; that stretch reads SLAILGIVVTILLLLAFLFLM. Residues 49 to 63 lie on the Cytoplasmic side of the membrane; it reads RKIQDCSQWNVLPTQ. The chain crosses the membrane as a helical span at residues 64 to 84; that stretch reads LLFLLSVLGLFGLAFAFIIEL. The Extracellular portion of the chain corresponds to 85 to 93; it reads NQQTAPVRY. A helical membrane pass occupies residues 94 to 114; sequence FLFGVLFALCFSCLLAHASNL. Residues 115 to 123 are Cytoplasmic-facing; the sequence is VKLVRGCVS. Residues 124-144 traverse the membrane as a helical segment; the sequence is FSWTTILCIAIGCSLLQIIIA. The Extracellular portion of the chain corresponds to 145 to 167; it reads TEYVTLIMTRGMMFVNMTPCQLN. A helical membrane pass occupies residues 168–188; that stretch reads VDFVVLLVYVLFLMALTFFVS. The Cytoplasmic segment spans residues 189-204; that stretch reads KATFCGPCENWKQHGR. The chain crosses the membrane as a helical span at residues 205–225; that stretch reads LIFITVLFSIIIWVVWISMLL. Residues 226–239 are Extracellular-facing; the sequence is RGNPQFQRQPQWDD. A helical membrane pass occupies residues 240–260; that stretch reads PVVCIALVTNAWVFLLLYIVP. Over 261-345 the chain is Cytoplasmic; it reads ELCILYRSCR…LSPQQDAGGV (85 aa).

It belongs to the G-protein coupled receptor 3 family. In terms of assembly, homodimer. Widely expressed in the peripheral system. Expression pattern is high in pancreas, medium in kidney, small intestine, spleen and testis, low in lung, colon, leukocyte, prostate and thymus and not detectable in brain, heart, liver, placenta, skeletal muscle and ovary.

The protein resides in the cell membrane. In terms of biological role, G-protein coupled receptor involved in hard keratin expression and likely plays a role in the development of hair and nails. The sequence is that of G-protein coupled receptor family C group 5 member D (GPRC5D) from Homo sapiens (Human).